The primary structure comprises 310 residues: Cysteine synthase (310 aa).

The residue at position 44 (K44) is an N6-(pyridoxal phosphate)lysine. Pyridoxal 5'-phosphate is bound by residues N74, 179-183 (GTGGT), and S267.

Belongs to the cysteine synthase/cystathionine beta-synthase family. Requires pyridoxal 5'-phosphate as cofactor.

It catalyses the reaction O-acetyl-L-serine + hydrogen sulfide = L-cysteine + acetate. The protein operates within amino-acid biosynthesis; L-cysteine biosynthesis; L-cysteine from L-serine: step 2/2. The chain is Cysteine synthase (cysK) from Neisseria meningitidis serogroup B (strain ATCC BAA-335 / MC58).